A 292-amino-acid chain; its full sequence is 4-diphosphocytidyl-2-C-methyl-D-erythritol kinase (292 aa).

The active site involves K10. An ATP-binding site is contributed by 100-110 (PIGSGLGGGSS). Residue D142 is part of the active site.

Belongs to the GHMP kinase family. IspE subfamily. Homodimer.

The catalysed reaction is 4-CDP-2-C-methyl-D-erythritol + ATP = 4-CDP-2-C-methyl-D-erythritol 2-phosphate + ADP + H(+). It participates in isoprenoid biosynthesis; isopentenyl diphosphate biosynthesis via DXP pathway; isopentenyl diphosphate from 1-deoxy-D-xylulose 5-phosphate: step 3/6. In terms of biological role, catalyzes the phosphorylation of the position 2 hydroxy group of 4-diphosphocytidyl-2C-methyl-D-erythritol. This chain is 4-diphosphocytidyl-2-C-methyl-D-erythritol kinase, found in Buchnera aphidicola subsp. Schizaphis graminum (strain Sg).